We begin with the raw amino-acid sequence, 293 residues long: Ribosomal RNA small subunit methyltransferase H (293 aa).

S-adenosyl-L-methionine-binding positions include 34 to 36, Asp-54, Leu-86, Asp-101, and Gln-108; that span reads GGH.

The protein belongs to the methyltransferase superfamily. RsmH family.

The protein localises to the cytoplasm. It catalyses the reaction cytidine(1402) in 16S rRNA + S-adenosyl-L-methionine = N(4)-methylcytidine(1402) in 16S rRNA + S-adenosyl-L-homocysteine + H(+). In terms of biological role, specifically methylates the N4 position of cytidine in position 1402 (C1402) of 16S rRNA. In Elusimicrobium minutum (strain Pei191), this protein is Ribosomal RNA small subunit methyltransferase H.